The chain runs to 170 residues: J domain-containing protein (170 aa).

The J domain occupies 17-82 (DYYALLGCDE…SKRALYDKWR (66 aa)). A disordered region spans residues 101 to 170 (QQSMHWSKPN…VISKFRNYEI (70 aa)). Residues 110–120 (NTKDRMLEGEP) show a composition bias toward basic and acidic residues. 2 stretches are compositionally biased toward low complexity: residues 121-135 (GKPS…SNPG) and 142-153 (GGAALWGRWGAG).

The chain is J domain-containing protein (jdp) from Manduca sexta (Tobacco hawkmoth).